A 624-amino-acid chain; its full sequence is Double-stranded RNA-binding protein Staufen homolog 2 (624 aa).

5 consecutive DRBM domains span residues 55–122, 142–228, 254–321, 354–422, and 540–604; these read STSI…NGLA, QRAN…SEIS, MKSF…PEYG, RRRE…IADQ, and LTCL…EKAD. The disordered stretch occupies residues 197-223; the sequence is LRNEPIPERSSLNGEANRGPEEDKDAN. Basic and acidic residues predominate over residues 214-223; that stretch reads RGPEEDKDAN. 2 disordered regions span residues 401 to 428 and 592 to 624; these read EKTG…TPKG and PFEQ…KAVV. A compositionally biased stretch (polar residues) spans 415–426; the sequence is QNSGIADQTSTP. Positions 596–605 are enriched in basic and acidic residues; that stretch reads AKLRGEKADN.

Its function is as follows. RNA-binding protein required for the microtubule-dependent transport of RNAs within polarized cell types. The protein is Double-stranded RNA-binding protein Staufen homolog 2 (stau2) of Xenopus tropicalis (Western clawed frog).